Here is a 143-residue protein sequence, read N- to C-terminus: Nucleoside diphosphate kinase (143 aa).

Residues Lys-11, Phe-59, Arg-87, Thr-93, Arg-104, and Asn-114 each contribute to the ATP site. The Pros-phosphohistidine intermediate role is filled by His-117.

Belongs to the NDK family. In terms of assembly, homotetramer. It depends on Mg(2+) as a cofactor.

Its subcellular location is the cytoplasm. The enzyme catalyses a 2'-deoxyribonucleoside 5'-diphosphate + ATP = a 2'-deoxyribonucleoside 5'-triphosphate + ADP. The catalysed reaction is a ribonucleoside 5'-diphosphate + ATP = a ribonucleoside 5'-triphosphate + ADP. In terms of biological role, major role in the synthesis of nucleoside triphosphates other than ATP. The ATP gamma phosphate is transferred to the NDP beta phosphate via a ping-pong mechanism, using a phosphorylated active-site intermediate. The sequence is that of Nucleoside diphosphate kinase from Shewanella pealeana (strain ATCC 700345 / ANG-SQ1).